Reading from the N-terminus, the 108-residue chain is Phosphoribosyl-ATP pyrophosphatase (108 aa).

The protein belongs to the PRA-PH family.

It is found in the cytoplasm. It catalyses the reaction 1-(5-phospho-beta-D-ribosyl)-ATP + H2O = 1-(5-phospho-beta-D-ribosyl)-5'-AMP + diphosphate + H(+). It functions in the pathway amino-acid biosynthesis; L-histidine biosynthesis; L-histidine from 5-phospho-alpha-D-ribose 1-diphosphate: step 2/9. The chain is Phosphoribosyl-ATP pyrophosphatase from Dechloromonas aromatica (strain RCB).